The sequence spans 301 residues: 4-hydroxybenzoate octaprenyltransferase (301 aa).

A run of 7 helical transmembrane segments spans residues I34–L54, L57–I77, L108–L128, W163–L183, D222–L242, I248–A268, and F280–L300.

Belongs to the UbiA prenyltransferase family. Mg(2+) is required as a cofactor.

It is found in the cell inner membrane. The enzyme catalyses all-trans-octaprenyl diphosphate + 4-hydroxybenzoate = 4-hydroxy-3-(all-trans-octaprenyl)benzoate + diphosphate. It functions in the pathway cofactor biosynthesis; ubiquinone biosynthesis. Catalyzes the prenylation of para-hydroxybenzoate (PHB) with an all-trans polyprenyl group. Mediates the second step in the final reaction sequence of ubiquinone-8 (UQ-8) biosynthesis, which is the condensation of the polyisoprenoid side chain with PHB, generating the first membrane-bound Q intermediate 3-octaprenyl-4-hydroxybenzoate. The chain is 4-hydroxybenzoate octaprenyltransferase from Xanthomonas campestris pv. campestris (strain 8004).